Here is a 432-residue protein sequence, read N- to C-terminus: Glutamate-1-semialdehyde 2,1-aminomutase (432 aa).

An N6-(pyridoxal phosphate)lysine modification is found at lysine 266.

It belongs to the class-III pyridoxal-phosphate-dependent aminotransferase family. HemL subfamily. As to quaternary structure, homodimer. Pyridoxal 5'-phosphate serves as cofactor.

It is found in the cytoplasm. It carries out the reaction (S)-4-amino-5-oxopentanoate = 5-aminolevulinate. The protein operates within porphyrin-containing compound metabolism; protoporphyrin-IX biosynthesis; 5-aminolevulinate from L-glutamyl-tRNA(Glu): step 2/2. The sequence is that of Glutamate-1-semialdehyde 2,1-aminomutase from Janthinobacterium sp. (strain Marseille) (Minibacterium massiliensis).